Here is a 64-residue protein sequence, read N- to C-terminus: Large ribosomal subunit protein uL29 (64 aa).

The protein belongs to the universal ribosomal protein uL29 family.

In Burkholderia mallei (strain NCTC 10247), this protein is Large ribosomal subunit protein uL29.